A 416-amino-acid chain; its full sequence is Na(+)/H(+) antiporter NhaA (416 aa).

A run of 11 helical transmembrane segments spans residues 39-59, 82-102, 119-139, 146-166, 175-195, 198-218, 234-254, 281-301, 315-335, 353-373, and 390-410; these read GIVL…PWAA, LHFW…GLEI, LPVL…LALV, GWAV…ALLG, VFLL…IALF, GGLQ…VLLL, AVLW…GVVL, PWVT…VALG, LLMA…VLLA, WGGL…AIFI, and GVLL…WWLQ.

This sequence belongs to the NhaA Na(+)/H(+) (TC 2.A.33) antiporter family.

It is found in the cell inner membrane. The enzyme catalyses Na(+)(in) + 2 H(+)(out) = Na(+)(out) + 2 H(+)(in). Functionally, na(+)/H(+) antiporter that extrudes sodium in exchange for external protons. The polypeptide is Na(+)/H(+) antiporter NhaA (Acidovorax sp. (strain JS42)).